Reading from the N-terminus, the 191-residue chain is Putative glutathione-dependent formaldehyde-activating enzyme (191 aa).

Residues 20–166 (FPGGNLYCKC…FHSLGLETYD (147 aa)) form the CENP-V/GFA domain. Zn(2+)-binding residues include cysteine 27, cysteine 29, cysteine 48, cysteine 50, cysteine 53, cysteine 95, and cysteine 98.

This sequence belongs to the Gfa family. The cofactor is Zn(2+).

It catalyses the reaction S-(hydroxymethyl)glutathione = glutathione + formaldehyde. It functions in the pathway one-carbon metabolism; formaldehyde degradation; formate from formaldehyde (glutathione route): step 1/3. Its function is as follows. Catalyzes the condensation of formaldehyde and glutathione to S-hydroxymethylglutathione. The chain is Putative glutathione-dependent formaldehyde-activating enzyme from Aspergillus niger (strain ATCC MYA-4892 / CBS 513.88 / FGSC A1513).